We begin with the raw amino-acid sequence, 685 residues long: N(6)-adenosine-methyltransferase MT-A70-like (685 aa).

S-adenosyl-L-methionine contacts are provided by residues 464–465 (DI) and Asp482. The positively charged region required for RNA-binding stretch occupies residues 552 to 565 (RIIRTGRTGHWLNH). S-adenosyl-L-methionine is bound by residues Lys599, 622-625 (RMHN), and 635-636 (NQ). Residues 657-685 (EIDVQPPSPPRASAMETDNEPMAIDSITA) are disordered. Ser664 is subject to Phosphoserine.

Belongs to the MT-A70-like family. In terms of assembly, interacts with FIP37. Interacts with MTB. Associates with MTB, FIP37, VIR and HAKAI to form the m6A writer complex which is essential for adenosine methylation at specific mRNA sequences.

It localises to the nucleus. The catalysed reaction is an adenosine in mRNA + S-adenosyl-L-methionine = an N(6)-methyladenosine in mRNA + S-adenosyl-L-homocysteine + H(+). Catalytic subunit of the N6-methyltransferase complex, a multiprotein complex that mediates N6-methyladenosine (m6A) methylation at the 5'-[AG]GAC-3' consensus sites of some mRNAs. Associates with MTB, FIP37, VIR and HAKAI to form the m6A writer complex which is essential for adenosine methylation at specific mRNA sequences. N6-methyladenosine (m6A) plays a role in mRNA stability, processing, translation efficiency and editing. This chain is N(6)-adenosine-methyltransferase MT-A70-like, found in Arabidopsis thaliana (Mouse-ear cress).